Reading from the N-terminus, the 526-residue chain is Tyrosine-protein kinase transforming protein Src (526 aa).

Residues 1–52 are disordered; it reads MGSSKSKPKDPSQRRRSLEPPDSTHHGGFPASQTPDETAAPDAHRNPSRSFG. Gly2 carries the N-myristoyl glycine; by host lipid modification. The segment covering 7-25 has biased composition (basic and acidic residues); it reads KPKDPSQRRRSLEPPDSTH. Residues 81–142 form the SH3 domain; sequence GGVTTFVALY…PSNYVAPSDS (62 aa). The 98-residue stretch at 148 to 245 folds into the SH2 domain; the sequence is WYFGKITRRE…GLCHRLTNVC (98 aa). Positions 267-517 constitute a Protein kinase domain; it reads LRLEAKLGQG…TFKYLQAQLL (251 aa). ATP-binding positions include 273–281 and Lys295; that span reads LGQGCFGEV. Asp386 (proton acceptor) is an active-site residue. Tyr416 carries the phosphotyrosine; by autocatalysis modification.

The protein belongs to the protein kinase superfamily. Tyr protein kinase family. SRC subfamily. Mn(2+) is required as a cofactor. The phosphorylated form is termed pp60v-src.

It catalyses the reaction L-tyrosyl-[protein] + ATP = O-phospho-L-tyrosyl-[protein] + ADP + H(+). Its function is as follows. This phosphoprotein, required for both the initiation and the maintenance of neoplastic transformation, is a protein kinase that catalyzes the phosphorylation of tyrosine residues in vitro. This is Tyrosine-protein kinase transforming protein Src (V-SRC) from Gallus gallus (Chicken).